Reading from the N-terminus, the 293-residue chain is Forkhead box protein N5 (293 aa).

The disordered stretch occupies residues 104 to 152; that stretch reads TSPPLQLQRQLSNDYSTVEDSEDEAPTSCSDVLTDDDDSYNPWQPKHKR. A compositionally biased stretch (polar residues) spans 106 to 119; the sequence is PPLQLQRQLSNDYS. The fork-head DNA-binding region spans 176–273; sequence RPPLNYCNLI…NEMHALSDDL (98 aa).

The protein localises to the nucleus. This chain is Forkhead box protein N5, found in Xenopus tropicalis (Western clawed frog).